The primary structure comprises 155 residues: Transcriptional repressor NrdR (155 aa).

Positions 1-10 (MQCPHCHHNS) are enriched in basic residues. Residues 1-21 (MQCPHCHHNSSRVVDSRPTDG) are disordered. Residues 3-34 (CPHCHHNSSRVVDSRPTDGGRAIRRRRECENC) fold into a zinc finger. An ATP-cone domain is found at 49-139 (LLVIKKNGTR…VYRQFKDMSV (91 aa)).

This sequence belongs to the NrdR family. It depends on Zn(2+) as a cofactor.

Functionally, negatively regulates transcription of bacterial ribonucleotide reductase nrd genes and operons by binding to NrdR-boxes. This Lacticaseibacillus casei (strain BL23) (Lactobacillus casei) protein is Transcriptional repressor NrdR.